Consider the following 671-residue polypeptide: DNA ligase (671 aa).

Residues 32–36 (DAEYD), 81–82 (SL), and E113 contribute to the NAD(+) site. The active-site N6-AMP-lysine intermediate is K115. NAD(+) is bound by residues R136, E173, K290, and K314. Zn(2+) contacts are provided by C408, C411, C426, and C432. Positions 593–671 (EIDSPFAGKT…EAEMLRLLGS (79 aa)) constitute a BRCT domain.

This sequence belongs to the NAD-dependent DNA ligase family. LigA subfamily. It depends on Mg(2+) as a cofactor. The cofactor is Mn(2+).

The enzyme catalyses NAD(+) + (deoxyribonucleotide)n-3'-hydroxyl + 5'-phospho-(deoxyribonucleotide)m = (deoxyribonucleotide)n+m + AMP + beta-nicotinamide D-nucleotide.. DNA ligase that catalyzes the formation of phosphodiester linkages between 5'-phosphoryl and 3'-hydroxyl groups in double-stranded DNA using NAD as a coenzyme and as the energy source for the reaction. It is essential for DNA replication and repair of damaged DNA. The protein is DNA ligase of Shigella sonnei (strain Ss046).